Here is a 462-residue protein sequence, read N- to C-terminus: Retinoic acid receptor alpha (462 aa).

The segment at 1–87 (MASNSSSCPT…PPPLPRIYKP (87 aa)) is modulating. A compositionally biased stretch (polar residues) spans 52 to 64 (GYSTPSPATIETQ). The segment at 52-77 (GYSTPSPATIETQSSSSEEIVPSPPS) is disordered. Ser-77 is modified (phosphoserine; by CDK7). NR C4-type zinc fingers lie at residues 88 to 108 (CFVC…CEGC) and 124 to 148 (CHRD…LQKC). The segment at residues 88-153 (CFVCQDKSSG…RLQKCFDVGM (66 aa)) is a DNA-binding region (nuclear receptor). At Ser-96 the chain carries Phosphoserine; by PKB/AKT1. Residues 154–182 (SKESVRNDRNKKKKEAPKPECSESYTLTP) form a hinge region. Residues Lys-166 and Lys-171 each participate in a glycyl lysine isopeptide (Lys-Gly) (interchain with G-Cter in SUMO) cross-link. The 235-residue stretch at 183-417 (EVGELIEKVR…PLIQEMLENS (235 aa)) folds into the NR LBD domain. A Phosphoserine; by PKA modification is found at Ser-219. An all-trans-retinoate-binding site is contributed by Cys-235. The short motif at 254–258 (IADQI) is the UBR5-degron element. Ser-287 contacts all-trans-retinoate. Lys-347 carries the post-translational modification N6,N6,N6-trimethyllysine. Ser-369 bears the Phosphoserine; by PKA and RPS6KA5 mark. Residue Lys-399 forms a Glycyl lysine isopeptide (Lys-Gly) (interchain with G-Cter in SUMO) linkage. Residues 404-419 (GSMPPLIQEMLENSEG) form a required for binding corepressor NCOR1 region. A 9aaTAD motif is present at residues 408-416 (PLIQEMLEN). Residues 420–462 (LDTLSGQSGGGTRDGGGLAPPPGSCSPSLSPSSHRSSPATQSP) are disordered. Residues 426–437 (QSGGGTRDGGGL) are compositionally biased toward gly residues. Positions 444–462 (CSPSLSPSSHRSSPATQSP) are enriched in low complexity.

The protein belongs to the nuclear hormone receptor family. NR1 subfamily. Heterodimer; with RXRA. Binds DNA preferentially as a heterodimer. RXRA serves as enhancer to induce RARA binding to RARE. Interacts with RXRG. Interacts with NCOA3 and NCOA6 coactivators, leading to a strong increase of transcription of target genes. Interacts with NCOA7; the interaction requires ligand-binding. Interacts (via the ligand-binding domain) with PRAME; interaction is direct and ligand (retinoic acid)-dependent. Interacts with PRKAR1A; the interaction negatively regulates RARA transcriptional activity. Interacts with NCOR1; the interaction occurs in the absence of ligand and represses transcriptional activity. Interacts with NCOR2. Interacts with PRMT2. Interacts with LRIF1. Interacts with ASXL1 and NCOA1. Interacts with ACTN4. Interacts with CDK7; the interaction is enhanced by interaction with GTF2H3. Interacts with GTF2H3; the interaction requires prior phosphorylation on Ser-369 which then enhances interaction with CDK7. In a complex with HDAC3, HDAC5 and HDAC7; the HDACs serve as corepressors of RARA, causing its deacetylation and inhibition of RARE DNA element binding; association with HDAC3, HDAC5 and HDAC7 is increased upon oscillatory shear stress. In the absence of hormonal ligand, interacts with TACC1. Post-translationally, phosphorylated on serine and threonine residues. Phosphorylation does not change during cell cycle. Phosphorylation on Ser-77 is crucial for the N-terminal AF1 transcriptional activity. Under stress conditions, MAPK8 enhances phosphorylation on Thr-181, Ser-445 and Ser-461 leading to RARA ubiquitination and degradation. Phosphorylation by AKT1 inhibits the transactivation activity. On retinoic acid stimulation, phosphorylation on Ser-369 by RPS6KA5 promotes interaction with GTF2H3 and the CDK7-mediated phosphorylation of Ser-77. In terms of processing, ubiquitinated by UBR5, leading to its degradation: UBR5 specifically recognizes and binds ligand-bound RARA when it is not associated with coactivators (NCOAs). In presence of NCOAs, the UBR5-degron is not accessible, preventing its ubiquitination and degradation. Sumoylated with SUMO2, mainly on Lys-399 which is also required for SENP6 binding. On all-trans retinoic acid (ATRA) binding, a conformational change may occur that allows sumoylation on two additional site, Lys-166 and Lys-171. Probably desumoylated by SENP6. Sumoylation levels determine nuclear localization and regulate ATRA-mediated transcriptional activity. Post-translationally, acetylated; acetylation is increased upon pulsatile shear stress and decreased upon oscillatory shear stress. Expressed in Sertoli cells and germ cells.

It is found in the nucleus. It localises to the cytoplasm. In terms of biological role, receptor for retinoic acid. Retinoic acid receptors bind as heterodimers to their target response elements in response to their ligands, all-trans or 9-cis retinoic acid, and regulate gene expression in various biological processes. The RXR/RAR heterodimers bind to the retinoic acid response elements (RARE) composed of tandem 5'-AGGTCA-3' sites known as DR1-DR5. In the absence of ligand, the RXR-RAR heterodimers associate with a multiprotein complex containing transcription corepressors that induce histone deacetylation, chromatin condensation and transcriptional suppression. On ligand binding, the corepressors dissociate from the receptors and associate with the coactivators leading to transcriptional activation. Formation of heterocomplex with histone deacetylases might lead to inhibition of RARE DNA element binding and to transcriptional repression. Transcriptional activation and RARE DNA element binding might be supported by the transcription factor KLF2. RARA plays an essential role in the regulation of retinoic acid-induced germ cell development during spermatogenesis. Has a role in the survival of early spermatocytes at the beginning prophase of meiosis. In Sertoli cells, may promote the survival and development of early meiotic prophase spermatocytes. In concert with RARG, required for skeletal growth, matrix homeostasis and growth plate function. Together with RXRA, positively regulates microRNA-10a expression, thereby inhibiting the GATA6/VCAM1 signaling response to pulsatile shear stress in vascular endothelial cells. In association with HDAC3, HDAC5 and HDAC7 corepressors, plays a role in the repression of microRNA-10a and thereby promotes the inflammatory response. In Mus musculus (Mouse), this protein is Retinoic acid receptor alpha (Rara).